A 275-amino-acid polypeptide reads, in one-letter code: Hydroxyethylthiazole kinase (275 aa).

Residue methionine 50 coordinates substrate. ATP is bound by residues arginine 126 and serine 171. A substrate-binding site is contributed by alanine 200.

The protein belongs to the Thz kinase family. It depends on Mg(2+) as a cofactor.

It carries out the reaction 5-(2-hydroxyethyl)-4-methylthiazole + ATP = 4-methyl-5-(2-phosphooxyethyl)-thiazole + ADP + H(+). The protein operates within cofactor biosynthesis; thiamine diphosphate biosynthesis; 4-methyl-5-(2-phosphoethyl)-thiazole from 5-(2-hydroxyethyl)-4-methylthiazole: step 1/1. Its function is as follows. Catalyzes the phosphorylation of the hydroxyl group of 4-methyl-5-beta-hydroxyethylthiazole (THZ). The sequence is that of Hydroxyethylthiazole kinase from Acinetobacter baumannii (strain AB307-0294).